The chain runs to 269 residues: Protein SirB1 (269 aa).

The protein belongs to the UPF0162 family.

In terms of biological role, required for maximal expression of sirC, not required to invade host cells. In Salmonella typhi, this protein is Protein SirB1 (sirB1).